Reading from the N-terminus, the 409-residue chain is Pleckstrin homology domain-containing family O member 1 (409 aa).

The disordered stretch occupies residues 1–20; that stretch reads MMKKNNSTKRGPQDGNHQCA. A PH domain is found at 21–132; the sequence is PPEKVGWVRK…WINALNSAIT (112 aa). The interval 133-193 is interaction with capping proteins (CPs); sequence RAKNRVLDEV…MLTLDLIQEE (61 aa). Residues 136–308 form an interaction with ATM, CKIP, IFP35 and NMI region; sequence NRVLDEVTVE…PHAPGQLSRI (173 aa). 3 disordered regions span residues 218-304, 325-350, and 390-409; these read LAGS…APGQ, EVQGLGDGKRKAKEPPRSPPDSESEQ, and TPDSHLRQTTQHSQYRKSLM. A phosphoserine mark is found at serine 227 and serine 271. The interval 308-409 is negative regulator of AP-1 activity; that stretch reads IQDLVARKLE…QHSQYRKSLM (102 aa). Positions 331–340 are enriched in basic and acidic residues; it reads DGKRKAKEPP. At serine 342 the chain carries Phosphoserine. A compositionally biased stretch (polar residues) spans 390-402; that stretch reads TPDSHLRQTTQHS.

In terms of assembly, heterodimer or homodimer. Interacts with CK2 and actin capping subunits (capping protein CP-alpha and CP-beta). CKIP1 and CK2 together inhibit the activity of actin capping protein at the barbed ends of actin filaments. Interacts with ATM, IFP35, JUN, JUND, NMI and PI3K. Interacts with AKT1, AKT2 and AKT3 (each isozyme of PKB), PtdIns(3,5)P2, PtdIns(4,5)P2 and PtdIns(3,4,5)P2. C-terminal fragments could be released during apoptosis via caspase-3-dependent cleavage.

The protein resides in the membrane. It localises to the nucleus. The protein localises to the cytoplasm. Functionally, plays a role in the regulation of the actin cytoskeleton through its interactions with actin capping protein (CP). May function to target CK2 to the plasma membrane thereby serving as an adapter to facilitate the phosphorylation of CP by protein kinase 2 (CK2). Appears to target ATM to the plasma membrane. Also implicated in PI3K-regulated muscle differentiation, the regulation of AP-1 activity (plasma membrane bound AP-1 regulator that translocates to the nucleus) and the promotion of apoptosis induced by tumor necrosis factor TNF. When bound to PKB, it inhibits it probably by decreasing PKB level of phosphorylation. This Bos taurus (Bovine) protein is Pleckstrin homology domain-containing family O member 1 (PLEKHO1).